The sequence spans 170 residues: Gas vesicle protein A2 (170 aa).

The segment at 86 to 170 (SPMAKTVGRA…PRRRTEEEDR (85 aa)) is disordered. 2 stretches are compositionally biased toward basic and acidic residues: residues 104–119 (LTDK…HEHE) and 127–137 (DRPRAGAERGR). Basic residues predominate over residues 138 to 148 (STQRPRSRPAA). Positions 149–170 (RPRDEDDRPRSRPRRRTEEEDR) are enriched in basic and acidic residues.

The protein belongs to the gas vesicle GvpA family. The gas vesicle shell is 2 nm thick and consists of a single layer of this protein. It forms helical ribs nearly perpendicular to the long axis of the vesicle.

The protein resides in the gas vesicle shell. Functionally, gas vesicles are hollow, gas filled proteinaceous nanostructures found in some microorganisms. During planktonic growth they allow positioning of the organism at a favorable depth for light or nutrient acquisition. GvpA forms the protein shell. It is not clear what function GVs perform in soil bacteria. The chain is Gas vesicle protein A2 from Streptomyces coelicolor (strain ATCC BAA-471 / A3(2) / M145).